Here is a 1178-residue protein sequence, read N- to C-terminus: MSQGFRGPTGVFPHQTQSYLDPSHEHSKWRYPQPQGPESYPRSFQLQQIEFLKGRLPEAPLIGIQTQSLPPFLPGHWPRFPGPPAQDRQLEIWEFPRSVTLRNQGFHIGPPLPPPHSRGTPWRGADGLCSHFRELSISQSPEQKVLNRLEELGEGKATTAHVLARELRIPKRDINRILYSLEKKGKLHRGRGKPPLWSLVPLSQAWTQPPGVVNPDSCIQEFPRGEPGLDSEDGDPASDLEGPSEPLDMAEIKEKICDYLFNVSNSSALNLAKNIGLTKARDVTSVLIDLERQGDVYRQGATPPIWYLTDKKRERLQMKRSTHSAPAPTPTAVPEATRSPSFPACHPPPAGASSSVAASKRVENGQEPAIKHESRHEARPGPMRLRPHAYHNGPSRAGYVASENGQWATDDIPDNLNSIHTAPGEFRAIMEMPSFYSPTLPRCSPYKKLTECQLKNPVSGLLEYAQFTSQTCDFNLIEQSGPSHEPRFKFQVVINGREFPPAEAGSKKVAKQDAAVKAMAILLREAKAKDSGQPEDLSHCPMEEDSEKPAEAQAPSSSATSLFSGKSPVTTLLECMHKLGNSCEFRLLSKEGPAHDPKFQYCVAVGAQTFPPVSAPSKKVAKQMAAEEAMKALQEEAASSADDQSGGANTDSLDESMAPNKIRRIGELVRYLNTNPVGGLLEYARSHGFAAEFKLIDQSGPPHEPKFVYQAKVGGRWFPAVCAHSKKQGKQDAADAALRVLIGESEKAEQLGFAEVTPVTGASLRRTMLLLSRSPDAHPKTLPLSGSTFHDQIAMLSHRCFNALTNSFQPSLLGRKILAAIIMKRDPEDMGVVVSLGTGNRCVKGDSLSLKGETVNDCHAEIISRRGFIRFLYSELMKYNHHTAKNSIFELARGGEKLQIKKTVSFHLYISTAPCGDGALFDKSCSDRAVESTESRHYPVFENPKQGKLRTKVENGEGTIPVESSDIVPTWDGIRLGERLRTMSCSDKILRWNVLGLQGALLTHFLQPVYLKSVTLGYLFSQGHLTRAICCRVTRDGKAFEDGLRYPFIVNHPKVGRVSVYDSKRQSGKTKETSVNWCMADGYDLEILDGTRGTVDGPGKELSRVSKKNIFLQFKKLCSFRARRDLLQLSYGEAKKAARDYDLAKNYFKKSLRDMGYGNWISKPQEEKNFYLCPVPND.

The tract at residues 1 to 40 is disordered; the sequence is MSQGFRGPTGVFPHQTQSYLDPSHEHSKWRYPQPQGPESY. Arginine 30 and arginine 42 each carry asymmetric dimethylarginine. Positions 135–201 constitute a Z-binding 1 domain; it reads LSISQSPEQK…GKPPLWSLVP (67 aa). Residues 135–204 are interaction with Z-DNA; it reads LSISQSPEQK…PLWSLVPLSQ (70 aa). Positions 221–244 are disordered; it reads EFPRGEPGLDSEDGDPASDLEGPS. Positions 229-238 are enriched in acidic residues; sequence LDSEDGDPAS. Residues serine 231 and serine 238 each carry the phosphoserine modification. Residues 246-310 enclose the Z-binding 2 domain; sequence PLDMAEIKEK…ATPPIWYLTD (65 aa). The interval 316–383 is disordered; the sequence is LQMKRSTHSA…SRHEARPGPM (68 aa). The span at 323 to 337 shows a compositional bias: low complexity; sequence HSAPAPTPTAVPEAT. A compositionally biased stretch (basic and acidic residues) spans 360 to 379; it reads KRVENGQEPAIKHESRHEAR. A Glycyl lysine isopeptide (Lys-Gly) (interchain with G-Cter in SUMO); alternate cross-link involves residue lysine 371. Residue lysine 371 forms a Glycyl lysine isopeptide (Lys-Gly) (interchain with G-Cter in SUMO1); alternate linkage. Lysine 371 is covalently cross-linked (Glycyl lysine isopeptide (Lys-Gly) (interchain with G-Cter in SUMO2); alternate). A Phosphoserine modification is found at serine 434. The 69-residue stretch at 456–524 folds into the DRBM 1 domain; it reads NPVSGLLEYA…AVKAMAILLR (69 aa). The span at 527–550 shows a compositional bias: basic and acidic residues; sequence KAKDSGQPEDLSHCPMEEDSEKPA. Positions 527–564 are disordered; it reads KAKDSGQPEDLSHCPMEEDSEKPAEAQAPSSSATSLFS. A compositionally biased stretch (polar residues) spans 554-564; it reads APSSSATSLFS. A phosphoserine mark is found at serine 567, serine 582, and serine 589. Residues 567-635 enclose the DRBM 2 domain; it reads SPVTTLLECM…AEEAMKALQE (69 aa). A disordered region spans residues 631–657; the sequence is KALQEEAASSADDQSGGANTDSLDESM. Low complexity predominate over residues 635 to 648; that stretch reads EEAASSADDQSGGA. Residues 665–674 form an N-terminal extension of DRBM 3 and constituent of a bi-partite nuclear localization signal region; the sequence is IGELVRYLNT. The DRBM 3 domain maps to 675–743; the sequence is NPVGGLLEYA…ADAALRVLIG (69 aa). A C-terminal extension of DRBM 3 and constituent of a bi-partite nuclear localization signal region spans residues 744–750; sequence ESEKAEQ. Threonine 757 is modified (phosphothreonine). 3 positions are modified to phosphoserine: serine 763, serine 772, and serine 774. Lysine 824 is covalently cross-linked (Glycyl lysine isopeptide (Lys-Gly) (interchain with G-Cter in SUMO2)). Residues 835 to 1170 form the A to I editase domain; that stretch reads SLGTGNRCVK…ISKPQEEKNF (336 aa). A Zn(2+)-binding site is contributed by histidine 859. Glutamate 861 (proton donor) is an active-site residue. Residues cysteine 915 and cysteine 985 each coordinate Zn(2+).

As to quaternary structure, homodimer. Homodimerization is essential for its catalytic activity. Isoform 5 can form heterodimers with ADARB1/ADAR2. Isoform 1 and isoform 5 (via DRBM 3 domain) interact with TNPO1. Isoform 5 (via DRBM domains) interacts with XPO5. Isoform 1 and isoform 5 can interact with UPF1. Isoform 1 interacts with ILF2/NF45 and ILF3/NF90. Binding to ILF3/NF90 up-regulates ILF3-mediated gene expression. Isoform 1 and isoform 5 interact with EIF2AK2/PKR. Post-translationally, sumoylation reduces RNA-editing activity. As to expression, highest levels in brain and spleen. Lowest levels in liver.

It localises to the cytoplasm. Its subcellular location is the nucleus. The protein localises to the nucleolus. It carries out the reaction adenosine in double-stranded RNA + H2O + H(+) = inosine in double-stranded RNA + NH4(+). Its function is as follows. Catalyzes the hydrolytic deamination of adenosine to inosine in double-stranded RNA (dsRNA) referred to as A-to-I RNA editing. This may affect gene expression and function in a number of ways that include mRNA translation by changing codons and hence the amino acid sequence of proteins since the translational machinery read the inosine as a guanosine; pre-mRNA splicing by altering splice site recognition sequences; RNA stability by changing sequences involved in nuclease recognition; genetic stability in the case of RNA virus genomes by changing sequences during viral RNA replication; and RNA structure-dependent activities such as microRNA production or targeting or protein-RNA interactions. Can edit both viral and cellular RNAs and can edit RNAs at multiple sites (hyper-editing) or at specific sites (site-specific editing). Its cellular RNA substrates include: bladder cancer-associated protein (BLCAP), neurotransmitter receptors for glutamate (GRIA2) and serotonin (HTR2C) and GABA receptor (GABRA3). Site-specific RNA editing of transcripts encoding these proteins results in amino acid substitutions which consequently alters their functional activities. Exhibits low-level editing at the GRIA2 Q/R site, but edits efficiently at the R/G site and HOTSPOT1. Does not affect polyomavirus replication but provides protection against virus-induced cytopathic effects. Essential for embryonic development and cell survival and plays a critical role in the maintenance of hematopoietic stem cells. This is Double-stranded RNA-specific adenosine deaminase (Adar) from Mus musculus (Mouse).